The chain runs to 393 residues: MVNGDLRIQYYDEELNIRKVIEQADLEHLDQALNICDLSSLERKLRLWHKLMPRIEPHYAVKCNDDPVVVKFLADLGTGFDCASKNELKLVLGLGVSPERIIFAHPCRPASHLRYAKEQQVVNGTVDNEYEIYKLRKHYPDSNLIVRFKSEAKKALCPLGDKYGCDAEADAAALMLLAKALGLKVTGTSFHVGSGCSEVEAYDRAIEKAENIFKVGEMIGHKMELLDVGGGFPGIDDEMFEEIAQSVNTSVELRFPDKRIRIISEPGRFFVEAAYTLICKVHAKREVRSKDGKLDTMMYYLNDGIFGAFAGMFYYPEEVAPELYLDEAESLPKLKSVIWGPSCDAMDKISDLLLPNLNPGDLLGFRNMGAYTMPIASPFNGFDVPETRFFKAK.

Lysine 62 carries the N6-(pyridoxal phosphate)lysine modification. Residues serine 194, glycine 231, and 265-268 (EPGR) each bind pyridoxal 5'-phosphate. 314–315 (YY) serves as a coordination point for substrate. Catalysis depends on cysteine 343, which acts as the Proton donor; shared with dimeric partner. Aspartate 344 serves as a coordination point for substrate. A pyridoxal 5'-phosphate-binding site is contributed by tyrosine 371.

Belongs to the Orn/Lys/Arg decarboxylase class-II family. As to quaternary structure, homodimer. Only the dimer is catalytically active, as the active sites are constructed of residues from both monomers. Requires pyridoxal 5'-phosphate as cofactor.

The enzyme catalyses L-ornithine + H(+) = putrescine + CO2. It functions in the pathway amine and polyamine biosynthesis; putrescine biosynthesis via L-ornithine pathway; putrescine from L-ornithine: step 1/1. Inhibited by antizyme (AZ) in response to polyamine levels. AZ inhibits the assembly of the functional homodimer by binding to ODC monomers and targeting them for ubiquitin-independent proteolytic destruction by the 26S proteasome. Its function is as follows. Catalyzes the first and rate-limiting step of polyamine biosynthesis that converts ornithine into putrescine, which is the precursor for the polyamines, spermidine and spermine. Polyamines are essential for cell proliferation and are implicated in cellular processes, ranging from DNA replication to apoptosis. The sequence is that of Ornithine decarboxylase 2 (Odc2) from Drosophila melanogaster (Fruit fly).